A 544-amino-acid polypeptide reads, in one-letter code: Putative glycerol-3-phosphate transporter 4 (544 aa).

6 helical membrane-spanning segments follow: residues 28–47 (TFRY…YHAS), 121–141 (VAFL…GDSL), 156–176 (FFVG…WFFL), 181–201 (AAGL…GNWF), 218–238 (SVGN…GWGW), and 240–260 (FIAP…FLAA). A disordered region spans residues 281-313 (KRDVEEEEEEVEEDLGTDVEGDGEGSSGSGSGY). A compositionally biased stretch (acidic residues) spans 285–303 (EEEEEEVEEDLGTDVEGDG). The next 7 membrane-spanning stretches (helical) occupy residues 319 to 339 (VGLL…CLFF), 342 to 362 (LVAY…TIGG), 371 to 391 (GNLS…CGYI), 402 to 422 (AAAF…YGGV), 428 to 448 (ILLM…ITTA), 471 to 491 (AIID…TGFL), and 494 to 514 (LGWQ…GLLL).

This sequence belongs to the major facilitator superfamily. Organophosphate:Pi antiporter (OPA) (TC 2.A.1.4) family.

Its subcellular location is the membrane. This Arabidopsis thaliana (Mouse-ear cress) protein is Putative glycerol-3-phosphate transporter 4.